A 286-amino-acid polypeptide reads, in one-letter code: Flagellin FlaB1 (286 aa).

Residues 231–286 form a required for interaction with FliW region; the sequence is LDIAAENLQAAESRIRDANIAKQMVEYTKNQVLTQSGTAMLAQANTSAQSILSILR.

The protein belongs to the bacterial flagellin family. The flagellum consists of an outer layer composed of repeating units of FlaA around a core that contains several antigenically related polypeptides. Interacts via its C-terminus with FliW; a synthetic peptide of residues 229-247 partially blocks binding to FliW.

Its subcellular location is the periplasmic flagellum. The protein localises to the periplasm. Component of the core of the flagella. This Treponema pallidum (strain Nichols) protein is Flagellin FlaB1 (flaB1).